A 307-amino-acid chain; its full sequence is UDP-3-O-acyl-N-acetylglucosamine deacetylase (307 aa).

The Zn(2+) site is built by histidine 78, histidine 241, and aspartate 245. Residue histidine 268 is the Proton donor of the active site.

The protein belongs to the LpxC family. It depends on Zn(2+) as a cofactor.

It catalyses the reaction a UDP-3-O-[(3R)-3-hydroxyacyl]-N-acetyl-alpha-D-glucosamine + H2O = a UDP-3-O-[(3R)-3-hydroxyacyl]-alpha-D-glucosamine + acetate. It participates in glycolipid biosynthesis; lipid IV(A) biosynthesis; lipid IV(A) from (3R)-3-hydroxytetradecanoyl-[acyl-carrier-protein] and UDP-N-acetyl-alpha-D-glucosamine: step 2/6. Its function is as follows. Catalyzes the hydrolysis of UDP-3-O-myristoyl-N-acetylglucosamine to form UDP-3-O-myristoylglucosamine and acetate, the committed step in lipid A biosynthesis. This is UDP-3-O-acyl-N-acetylglucosamine deacetylase from Variovorax paradoxus (strain S110).